The following is a 358-amino-acid chain: Transcription factor PCF6 (358 aa).

The segment at 1–29 is disordered; sequence MEAAVGDGEGGGGGGGRGKRGRGGGGGEM. A compositionally biased stretch (gly residues) spans 7–16; that stretch reads DGEGGGGGGG. Residues 52-110 form the TCP domain; that stretch reads GKDRHSKVYTAKGIRDRRVRLSVATAIQFYDLQDRLGFDQPSKAIEWLINAASPAIDTL. Disordered stretches follow at residues 127-163 and 282-308; these read ADAAPTRRRSQQQQQQLSNKSGCSSTSETSKGSDKEV and ANRGTLQSNSPSNMSGHHHHHHQQQLQ. Polar residues-rich tracts occupy residues 143–156 and 285–296; these read LSNKSGCSSTSETS and GTLQSNSPSNMS.

In terms of assembly, forms homodimers and heterodimers.

It is found in the nucleus. Functionally, transcription activator. Binds the promoter core sequence 5'-GGNCC-3'. The sequence is that of Transcription factor PCF6 (PCF6) from Oryza sativa subsp. indica (Rice).